Reading from the N-terminus, the 481-residue chain is Docking protein 1 (481 aa).

Residue methionine 1 is modified to N-acetylmethionine. Positions 4–119 (AVMEGPLFLQ…WVQTLCRNAF (116 aa)) constitute a PH domain. The residue at position 48 (serine 48) is a Phosphoserine. The IRS-type PTB domain occupies 151 to 259 (EGSQFWVTVQ…HRQKAQGKAG (109 aa)). A phosphoserine mark is found at serine 269 and serine 291. A disordered region spans residues 270-293 (HEGEVAEGKLPSPPGPQELLDSPP). Position 296 is a phosphotyrosine (tyrosine 296). Residues 307 to 329 (PCPSQDSLYSDPLDSTSAQAGEG) are disordered. A compositionally biased stretch (polar residues) spans 310–325 (SQDSLYSDPLDSTSAQ). Phosphotyrosine occurs at positions 337 and 341. Tyrosine 362 carries the post-translational modification Phosphotyrosine; by INSR. Residue tyrosine 377 is modified to Phosphotyrosine. Tyrosine 398 carries the post-translational modification Phosphotyrosine; by INSR. Residues 404 to 481 (PATDDYAVPP…KTGVKSEGST (78 aa)) are disordered. Tyrosine 409 is modified (phosphotyrosine). Serine 416 bears the Phosphoserine mark. Positions 436–458 (ATGSGIKSHNSALYSQVQKSGAS) are enriched in polar residues. Tyrosine 449 bears the Phosphotyrosine mark. Serine 460 bears the Phosphoserine mark.

The protein belongs to the DOK family. Type A subfamily. In terms of assembly, interacts with ABL1. Interacts with RasGAP and INPP5D/SHIP1. Interacts directly with phosphorylated ITGB3. Interacts with SRMS (via the SH2 and SH3 domains). Post-translationally, constitutively tyrosine-phosphorylated. Phosphorylated by TEC. Phosphorylated by LYN. Phosphorylated on tyrosine residues by the insulin receptor kinase. Results in the negative regulation of the insulin signaling pathway. Phosphorylated on tyrosine residues by SRMS. Expressed in pancreas, heart, leukocyte and spleen. Expressed in both resting and activated peripheral blood T-cells. Expressed in breast cancer.

The protein localises to the cytoplasm. It localises to the nucleus. The protein resides in the perinuclear region. Its function is as follows. DOK proteins are enzymatically inert adaptor or scaffolding proteins. They provide a docking platform for the assembly of multimolecular signaling complexes. DOK1 appears to be a negative regulator of the insulin signaling pathway. Modulates integrin activation by competing with talin for the same binding site on ITGB3. This chain is Docking protein 1 (DOK1), found in Homo sapiens (Human).